The primary structure comprises 437 residues: Protein translocase subunit SecY (437 aa).

10 helical membrane-spanning segments follow: residues 19–39 (LFTLGIIVIYRIGTHIPIPGV), 69–89 (LLQITIFALGIMPYITASIIL), 122–142 (VALAVLQGTGLVATARSGALF), 157–177 (IFTTLTMVVTMTAGTAVVMWL), 189–209 (GMSILMFISIAATFPSALWSI), 219–239 (WIEFGIVIAVGLVMVALVVFV), 275–295 (GIIPVIFASSLLYIPALVVQF), 318–338 (HITVYFFLIIFFAFFYVAISF), 378–398 (GSLYLGLIALVPTMALAPLGA), and 400–420 (QNFPFGGTSILIIVGVGLETV).

This sequence belongs to the SecY/SEC61-alpha family. In terms of assembly, component of the Sec protein translocase complex. Heterotrimer consisting of SecY, SecE and SecG subunits. The heterotrimers can form oligomers, although 1 heterotrimer is thought to be able to translocate proteins. Interacts with the ribosome. Interacts with SecDF, and other proteins may be involved. Interacts with SecA.

Its subcellular location is the cell membrane. The central subunit of the protein translocation channel SecYEG. Consists of two halves formed by TMs 1-5 and 6-10. These two domains form a lateral gate at the front which open onto the bilayer between TMs 2 and 7, and are clamped together by SecE at the back. The channel is closed by both a pore ring composed of hydrophobic SecY resides and a short helix (helix 2A) on the extracellular side of the membrane which forms a plug. The plug probably moves laterally to allow the channel to open. The ring and the pore may move independently. The protein is Protein translocase subunit SecY of Streptomyces scabiei.